Here is a 338-residue protein sequence, read N- to C-terminus: Aspartate carbamoyltransferase catalytic subunit (338 aa).

2 residues coordinate carbamoyl phosphate: Arg59 and Thr60. Residue Lys87 coordinates L-aspartate. Residues Arg109, His142, and Gln145 each coordinate carbamoyl phosphate. Arg182 and Arg253 together coordinate L-aspartate. Residues Gly294 and Pro295 each contribute to the carbamoyl phosphate site.

The protein belongs to the aspartate/ornithine carbamoyltransferase superfamily. ATCase family. Heterododecamer (2C3:3R2) of six catalytic PyrB chains organized as two trimers (C3), and six regulatory PyrI chains organized as three dimers (R2).

It catalyses the reaction carbamoyl phosphate + L-aspartate = N-carbamoyl-L-aspartate + phosphate + H(+). Its pathway is pyrimidine metabolism; UMP biosynthesis via de novo pathway; (S)-dihydroorotate from bicarbonate: step 2/3. Catalyzes the condensation of carbamoyl phosphate and aspartate to form carbamoyl aspartate and inorganic phosphate, the committed step in the de novo pyrimidine nucleotide biosynthesis pathway. This is Aspartate carbamoyltransferase catalytic subunit from Prochlorococcus marinus (strain MIT 9515).